The sequence spans 367 residues: snRNA-activating protein complex subunit 1 (367 aa).

Residues 1 to 168 are SNAPC3-binding; that stretch reads MGTPPGLQTD…EEFKDPSDRV (168 aa). The interval 164 to 268 is SNAPC4-binding; it reads PSDRVMKLIT…AESLAKIKSK (105 aa). Disordered stretches follow at residues 228-254 and 278-367; these read KDRKNPSLKSKINDGEEKMEGNSQETE and KSRR…KRKH. The span at 238–254 shows a compositional bias: basic and acidic residues; the sequence is KINDGEEKMEGNSQETE. Ser289 and Ser290 each carry phosphoserine. Residues 292 to 301 are compositionally biased toward polar residues; it reads CDSASGQGQV.

In terms of assembly, part of the SNAPc complex composed of 5 subunits: SNAPC1, SNAPC2, SNAPC3, SNAPC4 and SNAPC5. SNAPC1 interacts with SNAPC3, SNAPC4 and TBP.

It localises to the nucleus. Its function is as follows. Part of the SNAPc complex required for the transcription of both RNA polymerase II and III small-nuclear RNA genes. Binds to the proximal sequence element (PSE), a non-TATA-box basal promoter element common to these 2 types of genes. Recruits TBP and BRF2 to the U6 snRNA TATA box. In Macaca fascicularis (Crab-eating macaque), this protein is snRNA-activating protein complex subunit 1 (SNAPC1).